The following is a 306-amino-acid chain: Isoaspartyl peptidase/L-asparaginase (306 aa).

The Nucleophile role is filled by threonine 174. Substrate contacts are provided by residues 202 to 205 (RIGD) and 224 to 227 (TGKG).

The protein belongs to the Ntn-hydrolase family. In terms of assembly, heterotetramer of two alpha and two beta chains arranged as a dimer of alpha/beta heterodimers. In terms of processing, cleaved into an alpha and beta chain by autocatalysis; this activates the enzyme. The N-terminal residue of the beta subunit is responsible for the nucleophile hydrolase activity. Developing seeds.

The catalysed reaction is Cleavage of a beta-linked Asp residue from the N-terminus of a polypeptide.. Degrades proteins damaged by L-isoaspartyl residue formation (also known as beta-Asp residues). Also has L-asparaginase activity, which is used to liberate stored nitrogen during seed development. The sequence is that of Isoaspartyl peptidase/L-asparaginase from Lupinus arboreus (Tree lupine).